The sequence spans 235 residues: tRNA pseudouridine synthase B (235 aa).

Aspartate 45 (nucleophile) is an active-site residue.

Belongs to the pseudouridine synthase TruB family. Type 1 subfamily.

The enzyme catalyses uridine(55) in tRNA = pseudouridine(55) in tRNA. Its function is as follows. Responsible for synthesis of pseudouridine from uracil-55 in the psi GC loop of transfer RNAs. This Chlamydia felis (strain Fe/C-56) (Chlamydophila felis) protein is tRNA pseudouridine synthase B.